Consider the following 146-residue polypeptide: UPF0178 protein BT9727_2823 (146 aa).

The protein belongs to the UPF0178 family.

This Bacillus thuringiensis subsp. konkukian (strain 97-27) protein is UPF0178 protein BT9727_2823.